The sequence spans 464 residues: Secretion-regulating guanine nucleotide exchange factor (464 aa).

RCC1 repeat units lie at residues alanine 15–glycine 67, glycine 68–lysine 119, glycine 120–threonine 171, glycine 172–threonine 230, glycine 231–threonine 283, glycine 284–aspartate 351, and lysine 352–cysteine 402. Residues aspartate 422–glutamine 464 are disordered. A Phosphoserine modification is found at serine 429.

As to quaternary structure, interacts with SEC5. The interaction occurs only in the presence of magnesium or manganese and is stimulated by dCTP or GTP.

The protein resides in the cytoplasm. It is found in the nucleus. Its function is as follows. Probable guanine nucleotide exchange factor (GEF), which may be involved in the secretion process. This chain is Secretion-regulating guanine nucleotide exchange factor (Sergef), found in Mus musculus (Mouse).